Consider the following 787-residue polypeptide: Filamentous growth regulator 27 (787 aa).

The tract at residues 1–22 is disordered; the sequence is MSAPIVETKKASKRRIRRIPDD. Positions 31 to 57 form a DNA-binding region, zn(2)-C6 fungal-type; it reads CDNCKKRKFKCSGEKPCFECSKKGHDC. Residues 69-97 adopt a coiled-coil conformation; it reads GERMAKLKQKKDNNEKQRELVNEQIAQSS. 2 disordered regions span residues 120-140 and 200-221; these read SSHS…SSIP and RHKS…KGGI. Polar residues predominate over residues 209–221; sequence DNNTNNVPKKGGI.

It localises to the nucleus. Functionally, transcription factor involved in yeast cell adherence to silicone substrate, filamentous growth, and biofilm formation. The polypeptide is Filamentous growth regulator 27 (FGR27) (Candida albicans (strain SC5314 / ATCC MYA-2876) (Yeast)).